We begin with the raw amino-acid sequence, 156 residues long: Small ribosomal subunit protein uS7 (156 aa).

Belongs to the universal ribosomal protein uS7 family. In terms of assembly, part of the 30S ribosomal subunit. Contacts proteins S9 and S11.

Functionally, one of the primary rRNA binding proteins, it binds directly to 16S rRNA where it nucleates assembly of the head domain of the 30S subunit. Is located at the subunit interface close to the decoding center, probably blocks exit of the E-site tRNA. The chain is Small ribosomal subunit protein uS7 from Pediococcus pentosaceus (strain ATCC 25745 / CCUG 21536 / LMG 10740 / 183-1w).